Here is a 417-residue protein sequence, read N- to C-terminus: RH-like protein IIF (417 aa).

A run of 11 helical transmembrane segments spans residues 12 to 32 (CLPL…YFFT), 44 to 64 (LVAS…GFGF), 77 to 97 (VAFN…LDGF), 125 to 145 (ISAG…MVLV), 172 to 192 (FYLF…KPLP), 203 to 223 (TIPS…WPSF), 238 to 258 (VFNT…GSSL), 265 to 285 (ISMT…GTSC), 287 to 307 (LIPS…ISIG), 331 to 351 (NFSL…VRHT), and 358 to 378 (MIGF…AIAL).

This sequence belongs to the ammonium transporter (TC 2.A.49) family. Rh subfamily.

The protein resides in the membrane. In terms of biological role, may be part of an oligomeric complex which is likely to have a transport or channel function in the erythrocyte membrane. This Pan troglodytes (Chimpanzee) protein is RH-like protein IIF.